The following is a 40-amino-acid chain: MIGGLFLNTLSFVIVINHVIVNNTANVHTTQHENVIVQQH.

Belongs to the coronaviruses NS3b protein family.

This chain is Putative truncated non-structural protein 3b, found in Feline coronavirus (strain FIPV WSU-79/1146) (FCoV).